The primary structure comprises 434 residues: MSADYWNSSQRNQWQLTRFSLLEARRRVLLLERKMIQNGLIKDYPNIIYDYNMRIYLHNLLIKLGRRLNIRQIALATAEIYLTRFLTRVSLKEINVYLLITTCIYVACKIEECPQHIRLILSEARNIWPEYIPHDVTKLAEFEFYLIEEMDSYLLLHHPYKSLMQINEFLSNNYNVFGFKLTVEELQNAWSLINDSYITDLHLLLPPHTIAVAAIYITVVLKKNLSRVRQGNNNDNNININTMHISTGSSTNPININNNNNTNTSNNNGTTSTTTTTTAQETQVLGQDDNTEMNIDDLMNLTKSSNNSQDKSDDKMDIDNPLQSQVNLSQIQNQTQHQHQESTHNNTSSTNTGRNGINGQISQSNQELNNFDLDILDEDTIKINKFMNFLEHSHINLDEVVEAVQDMMNMYVLWNRYNEQGVKKALQVMLLNRI.

The 133-residue stretch at 23-155 (EARRRVLLLE…LIEEMDSYLL (133 aa)) folds into the Cyclin N-terminal domain. Low complexity predominate over residues 248–278 (GSSTNPININNNNNTNTSNNNGTTSTTTTTT). 3 disordered regions span residues 248–292 (GSST…DNTE), 301–320 (LTKSSNNSQDKSDDKMDIDN), and 330–362 (QIQNQTQHQHQESTHNNTSSTNTGRNGINGQIS). The span at 330–359 (QIQNQTQHQHQESTHNNTSSTNTGRNGING) shows a compositional bias: low complexity.

Belongs to the cyclin family. Cyclin C subfamily. Component of the SRB8-11 complex, a regulatory module of the Mediator complex.

The protein localises to the nucleus. Component of the SRB8-11 complex. The SRB8-11 complex is a regulatory module of the Mediator complex which is itself involved in regulation of basal and activated RNA polymerase II-dependent transcription. The SRB8-11 complex may be involved in the transcriptional repression of a subset of genes regulated by Mediator. It may inhibit the association of the Mediator complex with RNA polymerase II to form the holoenzyme complex. The SRB8-11 complex phosphorylates the C-terminal domain (CTD) of the largest subunit of RNA polymerase II. This Candida albicans (strain SC5314 / ATCC MYA-2876) (Yeast) protein is RNA polymerase II holoenzyme cyclin-like subunit (SSN8).